We begin with the raw amino-acid sequence, 60 residues long: Large ribosomal subunit protein uL30 (60 aa).

This sequence belongs to the universal ribosomal protein uL30 family. Part of the 50S ribosomal subunit.

The polypeptide is Large ribosomal subunit protein uL30 (Lactiplantibacillus plantarum (strain ATCC BAA-793 / NCIMB 8826 / WCFS1) (Lactobacillus plantarum)).